A 278-amino-acid chain; its full sequence is Complement component 1 Q subcomponent-binding protein, mitochondrial (278 aa).

A mitochondrion-targeting transit peptide spans 1–70; it reads MLPLLRCVPR…PVPCACGCGA (70 aa). A C1q binding region spans residues 73–90; it reads TEGDKAFVEFLTDEIKEE. 2 positions are modified to N6-acetyllysine: Lys-88 and Lys-91. The interval 133–162 is disordered; the sequence is NNSIPPTFDGEEEPSQGQKAEEQEPERTST. The interaction with MAVS stretch occupies residues 165–209; the sequence is FVVEVTKTDGKKTLVLDCHYPEDEIGHEDEAESDIFSIKEVSFQA. Tyr-184 is modified (phosphotyrosine). Ser-197 and Ser-201 each carry phosphoserine. Residue Thr-210 is modified to Phosphothreonine.

This sequence belongs to the MAM33 family. Homotrimer; three monomers form a donut-shaped structure with an unusually asymmetric charge distribution on the surface. Interacts with CDK13, HRK, VTN, NFYB, ADRA1B, FOXC1, DDX21, DDX50, NCL, SRSF1 and SRSF9. Interacts with CD93; the association may represent a cell surface C1q receptor. Interacts with KRT1; the association represents a cell surface kininogen receptor. Interacts with CD209; the interaction is indicative for a C1q:C1QBP:CD209 signaling complex. Interacts with FBL and RRP1; the respective interactions with C1QBP are competitive. Probably associates with the mitoribosome. Interacts with MAVS; the interaction occurs upon viral transfection. Interacts with PPIF. Interacts with U2AF1L4. Interacts with PLEKHN1. Interacts with VGF-derived peptide TLQP-21. Interacts with MRE11 and RAD50; forming the MRC (MRE11-RAD50-C1QBP) complex that inhibits the activity of MRE11. As to expression, ubiquitous.

It is found in the mitochondrion matrix. Its subcellular location is the nucleus. The protein resides in the cell membrane. The protein localises to the secreted. It localises to the cytoplasm. It is found in the nucleolus. Functionally, is believed to be a multifunctional and multicompartmental protein involved in inflammation and infection processes, ribosome biogenesis, protein synthesis in mitochondria, regulation of apoptosis, transcriptional regulation and pre-mRNA splicing. At the cell surface is thought to act as an endothelial receptor for plasma proteins of the complement and kallikrein-kinin cascades. Putative receptor for C1q; specifically binds to the globular 'heads' of C1q thus inhibiting C1; may perform the receptor function through a complex with C1qR/CD93. In complex with cytokeratin-1/KRT1 is a high affinity receptor for kininogen-1/HMWK. Can also bind other plasma proteins, such as coagulation factor XII leading to its autoactivation. May function to bind initially fluid kininogen-1 to the cell membrane. The secreted form may enhance both extrinsic and intrinsic coagulation pathways. It is postulated that the cell surface form requires docking with transmembrane proteins for downstream signaling which might be specific for a cell-type or response. By acting as C1q receptor is involved in chemotaxis of immature dendritic cells and neutrophils and is proposed to signal through CD209/DC-SIGN on immature dendritic cells, through integrin alpha-4/beta-1 during trophoblast invasion of the decidua, and through integrin beta-1 during endothelial cell adhesion and spreading. Signaling involved in inhibition of innate immune response is implicating the PI3K-AKT/PKB pathway. Required for protein synthesis in mitochondria. In mitochondrial translation may be involved in formation of functional 55S mitoribosomes; the function seems to involve its RNA-binding activity. Acts as a RNA modification reader, which specifically recognizes and binds mitochondrial RNAs modified by C5-methylcytosine (m5C) in response to stress, and promotes recruitment of the mitochondrial degradosome complex, leading to their degradation. May be involved in the nucleolar ribosome maturation process; the function may involve the exchange of FBL for RRP1 in the association with pre-ribosome particles. Involved in regulation of RNA splicing by inhibiting the RNA-binding capacity of SRSF1 and its phosphorylation. Is required for the nuclear translocation of splicing factor U2AF1L4. Involved in regulation of CDKN2A- and HRK-mediated apoptosis. May be involved in regulation of FOXC1 transcriptional activity and NFY/CCAAT-binding factor complex-mediated transcription. May play a role in antibacterial defense. Acts as a regulator of DNA repair via homologous recombination by inhibiting the activity of MRE11: interacts with unphosphorylated MRE11 and RAD50 in absence of DNA damage, preventing formation and activity of the MRN complex. Following DNA damage, dissociates from phosphorylated MRE11, allowing formation of the MRN complex. The polypeptide is Complement component 1 Q subcomponent-binding protein, mitochondrial (C1qbp) (Mus musculus (Mouse)).